The primary structure comprises 1274 residues: Regulator of telomere elongation helicase 1 (1274 aa).

Positions 7 to 296 (NGVTVDFPFQ…ARVAQHGELQ (290 aa)) constitute a Helicase ATP-binding domain. 42 to 49 (SPTGTGKT) is an ATP binding site. Residues Cys-145, Cys-163, Cys-172, and Cys-207 each coordinate [4Fe-4S] cluster. The Nuclear localization signal signature appears at 151–167 (KKQESNHMQISLCRKKV). The DEAH box signature appears at 250 to 253 (DEAH). The Nuclear localization signal signature appears at 871 to 877 (QRGGKKK). Disordered stretches follow at residues 982–1002 (NSLP…RREL), 1014–1038 (RQLD…SKGD), and 1143–1198 (ELPC…DDTI). Residues 1186-1196 (QRPDQSARSDD) are compositionally biased toward basic and acidic residues.

This sequence belongs to the helicase family. RAD3/XPD subfamily. Interacts with TERF1. Interacts (via PIP-box) with PCNA; the interaction is direct and essential for suppressing telomere fragility. Interacts with MMS19; the interaction mediates the association of RTEL1 with the cytosolic iron-sulfur protein assembly (CIA) complex.

The protein localises to the nucleus. It carries out the reaction ATP + H2O = ADP + phosphate + H(+). Its function is as follows. A probable ATP-dependent DNA helicase implicated in telomere-length regulation, DNA repair and the maintenance of genomic stability. Acts as an anti-recombinase to counteract toxic recombination and limit crossover during meiosis. Regulates meiotic recombination and crossover homeostasis by physically dissociating strand invasion events and thereby promotes noncrossover repair by meiotic synthesis dependent strand annealing (SDSA) as well as disassembly of D loop recombination intermediates. Also disassembles T loops and prevents telomere fragility by counteracting telomeric G4-DNA structures, which together ensure the dynamics and stability of the telomere. The chain is Regulator of telomere elongation helicase 1 (Rtel1) from Rattus norvegicus (Rat).